Consider the following 263-residue polypeptide: Ribosomal RNA small subunit methyltransferase A (263 aa).

S-adenosyl-L-methionine-binding residues include Asn-20, Leu-22, Gly-47, Glu-68, Asp-90, and Asn-110.

It belongs to the class I-like SAM-binding methyltransferase superfamily. rRNA adenine N(6)-methyltransferase family. RsmA subfamily.

The protein localises to the cytoplasm. It catalyses the reaction adenosine(1518)/adenosine(1519) in 16S rRNA + 4 S-adenosyl-L-methionine = N(6)-dimethyladenosine(1518)/N(6)-dimethyladenosine(1519) in 16S rRNA + 4 S-adenosyl-L-homocysteine + 4 H(+). In terms of biological role, specifically dimethylates two adjacent adenosines (A1518 and A1519) in the loop of a conserved hairpin near the 3'-end of 16S rRNA in the 30S particle. May play a critical role in biogenesis of 30S subunits. In Chlorobium limicola (strain DSM 245 / NBRC 103803 / 6330), this protein is Ribosomal RNA small subunit methyltransferase A.